The chain runs to 106 residues: Iron-sulfur cluster assembly protein CyaY (106 aa).

This sequence belongs to the frataxin family.

Functionally, involved in iron-sulfur (Fe-S) cluster assembly. May act as a regulator of Fe-S biogenesis. The polypeptide is Iron-sulfur cluster assembly protein CyaY (Yersinia pestis bv. Antiqua (strain Antiqua)).